The sequence spans 454 residues: UDP-N-acetylmuramoylalanine--D-glutamate ligase (454 aa).

118-124 contacts ATP; it reads GTNGKTT.

It belongs to the MurCDEF family.

The protein localises to the cytoplasm. The catalysed reaction is UDP-N-acetyl-alpha-D-muramoyl-L-alanine + D-glutamate + ATP = UDP-N-acetyl-alpha-D-muramoyl-L-alanyl-D-glutamate + ADP + phosphate + H(+). Its pathway is cell wall biogenesis; peptidoglycan biosynthesis. Cell wall formation. Catalyzes the addition of glutamate to the nucleotide precursor UDP-N-acetylmuramoyl-L-alanine (UMA). This is UDP-N-acetylmuramoylalanine--D-glutamate ligase from Thermosynechococcus vestitus (strain NIES-2133 / IAM M-273 / BP-1).